Consider the following 461-residue polypeptide: Epidermin leader peptide-processing serine protease EpiP (461 aa).

An N-terminal signal peptide occupies residues 1-23 (MNKFKFFIVFLILSLVFLQNEYA). In terms of domain architecture, Peptidase S8 spans 121–459 (QWDMRKITNE…NGKLDVYKLL (339 aa)). Active-site charge relay system residues include Asp-149, His-194, and Ser-402.

It belongs to the peptidase S8 family.

It participates in antibiotic biosynthesis; epidermin biosynthesis. Its function is as follows. Protease which cleaves the matured lantibiotic from the modified prepeptide. This chain is Epidermin leader peptide-processing serine protease EpiP (epiP), found in Staphylococcus epidermidis.